Consider the following 69-residue polypeptide: Small ribosomal subunit protein bS21 (69 aa).

The interval 49-69 (IESAKRKAEKKKRLFSKKDKA) is disordered.

The protein belongs to the bacterial ribosomal protein bS21 family.

This is Small ribosomal subunit protein bS21 from Leptospira borgpetersenii serovar Hardjo-bovis (strain JB197).